A 229-amino-acid polypeptide reads, in one-letter code: Large ribosomal subunit protein uL1 (229 aa).

It belongs to the universal ribosomal protein uL1 family. Part of the 50S ribosomal subunit.

In terms of biological role, binds directly to 23S rRNA. The L1 stalk is quite mobile in the ribosome, and is involved in E site tRNA release. Functionally, protein L1 is also a translational repressor protein, it controls the translation of the L11 operon by binding to its mRNA. The chain is Large ribosomal subunit protein uL1 from Mycoplasmopsis pulmonis (strain UAB CTIP) (Mycoplasma pulmonis).